The chain runs to 67 residues: Cysteine-rich venom protein bucarin (67 aa).

An SCP domain is found at 13–58 (VDKHNALRRSVRPTARNMLQMEWNSNAAQNAKRFADRCTFAHSPPH).

It belongs to the CRISP family. Post-translationally, contains 8 disulfide bonds. Expressed by the venom gland.

Its subcellular location is the secreted. Its function is as follows. Blocks contraction of smooth muscle elicited by high potassium-induced depolarization, but does not block caffeine-stimulated contraction. May target voltage-gated calcium channels on smooth muscle. This Bungarus candidus (Malayan krait) protein is Cysteine-rich venom protein bucarin.